Reading from the N-terminus, the 256-residue chain is Hydroxyacylglutathione hydrolase (256 aa).

His-57, His-59, Asp-61, His-62, His-115, Asp-134, and His-172 together coordinate Zn(2+).

This sequence belongs to the metallo-beta-lactamase superfamily. Glyoxalase II family. As to quaternary structure, monomer. It depends on Zn(2+) as a cofactor.

The enzyme catalyses an S-(2-hydroxyacyl)glutathione + H2O = a 2-hydroxy carboxylate + glutathione + H(+). It functions in the pathway secondary metabolite metabolism; methylglyoxal degradation; (R)-lactate from methylglyoxal: step 2/2. Functionally, thiolesterase that catalyzes the hydrolysis of S-D-lactoyl-glutathione to form glutathione and D-lactic acid. The sequence is that of Hydroxyacylglutathione hydrolase from Rhodospirillum rubrum (strain ATCC 11170 / ATH 1.1.1 / DSM 467 / LMG 4362 / NCIMB 8255 / S1).